Reading from the N-terminus, the 650-residue chain is Probable Xaa-Pro aminopeptidase P (650 aa).

Residues D447, D458, E556, and E570 each coordinate Mn(2+).

The protein belongs to the peptidase M24B family. The cofactor is Mn(2+).

The catalysed reaction is Release of any N-terminal amino acid, including proline, that is linked to proline, even from a dipeptide or tripeptide.. Functionally, catalyzes the removal of a penultimate prolyl residue from the N-termini of peptides. In Phaeosphaeria nodorum (strain SN15 / ATCC MYA-4574 / FGSC 10173) (Glume blotch fungus), this protein is Probable Xaa-Pro aminopeptidase P (AMPP).